A 192-amino-acid polypeptide reads, in one-letter code: MGVPERPTLLLLLSLLLIPLGLPVLCAPPRLICDSRVLERYILEAKEAENVTMGCAEGPRLSENITVPDTKVNFYAWKRMEVEEQAIEVWQGLSLLSEAILQAQALLANSSQPPETLQLHIDKAISGLRSLTSLLRVLGAQKELMSPPDTTPPAPLRTLTVDTFCKLFRVYANFLRGKLKLYTGEVCRRGDR.

Residues 1–26 (MGVPERPTLLLLLSLLLIPLGLPVLC) form the signal peptide. A disulfide bridge connects residues Cys-33 and Cys-187. Asn-50, Asn-64, and Asn-109 each carry an N-linked (GlcNAc...) asparagine glycan.

This sequence belongs to the EPO/TPO family. Produced by kidney or liver of adult mammals and by liver of fetal or neonatal mammals.

It is found in the secreted. Functionally, hormone involved in the regulation of erythrocyte proliferation and differentiation and the maintenance of a physiological level of circulating erythrocyte mass. Binds to EPOR leading to EPOR dimerization and JAK2 activation thereby activating specific downstream effectors, including STAT1 and STAT3. This is Erythropoietin (Epo) from Mus musculus (Mouse).